We begin with the raw amino-acid sequence, 598 residues long: Rho-related protein racA (598 aa).

D11 to S17 lines the GTP pocket. Positions Y32–Y40 match the Effector region motif. GTP-binding positions include D57–Q61 and T115–D118. The segment at A175–P210 is disordered. Residues G182 to K197 show a composition bias toward low complexity. 2 BTB domains span residues S239–D344 and S405–E472.

In the N-terminal section; belongs to the small GTPase superfamily. Rho family. In terms of assembly, interacts with pakB.

This is Rho-related protein racA (racA) from Dictyostelium discoideum (Social amoeba).